Here is a 540-residue protein sequence, read N- to C-terminus: Chaperonin GroEL (540 aa).

Residues 30-33, Lys-51, 87-91, Gly-415, and Asp-495 each bind ATP; these read TLGP and DGTTT.

It belongs to the chaperonin (HSP60) family. In terms of assembly, forms a cylinder of 14 subunits composed of two heptameric rings stacked back-to-back. Interacts with the co-chaperonin GroES.

The protein localises to the cytoplasm. It catalyses the reaction ATP + H2O + a folded polypeptide = ADP + phosphate + an unfolded polypeptide.. Its function is as follows. Together with its co-chaperonin GroES, plays an essential role in assisting protein folding. The GroEL-GroES system forms a nano-cage that allows encapsulation of the non-native substrate proteins and provides a physical environment optimized to promote and accelerate protein folding. In Erwinia aphidicola, this protein is Chaperonin GroEL.